We begin with the raw amino-acid sequence, 185 residues long: UPF0149 protein PD_0802 (185 aa).

The protein belongs to the UPF0149 family.

The sequence is that of UPF0149 protein PD_0802 from Xylella fastidiosa (strain Temecula1 / ATCC 700964).